We begin with the raw amino-acid sequence, 146 residues long: Transcriptional regulator MraZ (146 aa).

2 SpoVT-AbrB domains span residues 5-51 and 80-123; these read NHPT…PLQE and GQMV…NHEA.

It belongs to the MraZ family. In terms of assembly, forms oligomers.

Its subcellular location is the cytoplasm. The protein resides in the nucleoid. The polypeptide is Transcriptional regulator MraZ (Acidobacterium capsulatum (strain ATCC 51196 / DSM 11244 / BCRC 80197 / JCM 7670 / NBRC 15755 / NCIMB 13165 / 161)).